Consider the following 244-residue polypeptide: Signal recognition particle receptor subunit beta (244 aa).

A helical transmembrane segment spans residues 7–23 (IIACLLVIGTTIALIAV). Residues 45 to 53 (GPQNSGKTS), 66 to 69 (TVVS), glycine 90, and 154 to 157 (NKSE) contribute to the GTP site.

Belongs to the SRP receptor beta subunit family. In terms of assembly, heterodimer of an alpha and a beta chain.

The protein localises to the endoplasmic reticulum membrane. Component of the signal recognition particle (SRP) complex receptor (SR). Ensures, in conjunction with the SRP complex, the correct targeting of the nascent secretory proteins to the endoplasmic reticulum membrane system. May mediate the membrane association of SR. The protein is Signal recognition particle receptor subunit beta (SRP102) of Saccharomyces cerevisiae (strain ATCC 204508 / S288c) (Baker's yeast).